Reading from the N-terminus, the 229-residue chain is Cytochrome c oxidase subunit 2 (229 aa).

The Mitochondrial intermembrane portion of the chain corresponds to 1–26; it reads MATWAQFGLQDASSPLMEELTYFHDY. Residues 27 to 48 form a helical membrane-spanning segment; the sequence is ALIVLTLITILVFYGLVSLLLS. The Mitochondrial matrix portion of the chain corresponds to 49–62; the sequence is SSTNRFFLEGQELE. A helical membrane pass occupies residues 63–82; it reads TIWTVVPAFILIFIALPSLQ. Residues 83-229 lie on the Mitochondrial intermembrane side of the membrane; it reads LLYLMDEVNN…ENWVAQYIEE (147 aa). Positions 161, 196, 198, 200, 204, and 207 each coordinate Cu cation. E198 serves as a coordination point for Mg(2+).

This sequence belongs to the cytochrome c oxidase subunit 2 family. In terms of assembly, component of the cytochrome c oxidase (complex IV, CIV), a multisubunit enzyme composed of a catalytic core of 3 subunits and several supernumerary subunits. The complex exists as a monomer or a dimer and forms supercomplexes (SCs) in the inner mitochondrial membrane with ubiquinol-cytochrome c oxidoreductase (cytochrome b-c1 complex, complex III, CIII). It depends on Cu cation as a cofactor.

The protein localises to the mitochondrion inner membrane. It catalyses the reaction 4 Fe(II)-[cytochrome c] + O2 + 8 H(+)(in) = 4 Fe(III)-[cytochrome c] + 2 H2O + 4 H(+)(out). Its function is as follows. Component of the cytochrome c oxidase, the last enzyme in the mitochondrial electron transport chain which drives oxidative phosphorylation. The respiratory chain contains 3 multisubunit complexes succinate dehydrogenase (complex II, CII), ubiquinol-cytochrome c oxidoreductase (cytochrome b-c1 complex, complex III, CIII) and cytochrome c oxidase (complex IV, CIV), that cooperate to transfer electrons derived from NADH and succinate to molecular oxygen, creating an electrochemical gradient over the inner membrane that drives transmembrane transport and the ATP synthase. Cytochrome c oxidase is the component of the respiratory chain that catalyzes the reduction of oxygen to water. Electrons originating from reduced cytochrome c in the intermembrane space (IMS) are transferred via the dinuclear copper A center (CU(A)) of subunit 2 and heme A of subunit 1 to the active site in subunit 1, a binuclear center (BNC) formed by heme A3 and copper B (CU(B)). The BNC reduces molecular oxygen to 2 water molecules using 4 electrons from cytochrome c in the IMS and 4 protons from the mitochondrial matrix. This chain is Cytochrome c oxidase subunit 2 (COII), found in Paracentrotus lividus (Common sea urchin).